The sequence spans 283 residues: GTPase Era (283 aa).

The region spanning 7–175 (YCGHVIIVGK…KNIIKSYLPE (169 aa)) is the Era-type G domain. Residues 15-22 (GKANVGKS) are G1. 15–22 (GKANVGKS) is a GTP binding site. The G2 stretch occupies residues 41–45 (NTTQS). The tract at residues 62-65 (DTPG) is G3. Residues 62-66 (DTPGV) and 124-127 (NKID) contribute to the GTP site. The interval 124-127 (NKID) is G4. Residues 154–156 (ISA) are G5. A KH type-2 domain is found at 198–283 (IREQLILFLG…HLVLWVKDKN (86 aa)).

The protein belongs to the TRAFAC class TrmE-Era-EngA-EngB-Septin-like GTPase superfamily. Era GTPase family. In terms of assembly, monomer.

The protein resides in the cytoplasm. It is found in the cell membrane. Its function is as follows. An essential GTPase that binds both GDP and GTP, with rapid nucleotide exchange. Plays a role in 16S rRNA processing and 30S ribosomal subunit biogenesis and possibly also in cell cycle regulation and energy metabolism. The chain is GTPase Era from Buchnera aphidicola subsp. Acyrthosiphon pisum (strain Tuc7).